A 1024-amino-acid polypeptide reads, in one-letter code: Isoleucine--tRNA ligase (1024 aa).

The 'HIGH' region motif lies at 52–62; that stretch reads PTANGRPHVGH. The 'KMSKS' region motif lies at 590–594; it reads KMSKS. Lysine 593 lines the ATP pocket.

The protein belongs to the class-I aminoacyl-tRNA synthetase family. IleS type 2 subfamily. As to quaternary structure, monomer. Zn(2+) serves as cofactor.

The protein resides in the cytoplasm. The catalysed reaction is tRNA(Ile) + L-isoleucine + ATP = L-isoleucyl-tRNA(Ile) + AMP + diphosphate. In terms of biological role, catalyzes the attachment of isoleucine to tRNA(Ile). As IleRS can inadvertently accommodate and process structurally similar amino acids such as valine, to avoid such errors it has two additional distinct tRNA(Ile)-dependent editing activities. One activity is designated as 'pretransfer' editing and involves the hydrolysis of activated Val-AMP. The other activity is designated 'posttransfer' editing and involves deacylation of mischarged Val-tRNA(Ile). The protein is Isoleucine--tRNA ligase of Picrophilus torridus (strain ATCC 700027 / DSM 9790 / JCM 10055 / NBRC 100828 / KAW 2/3).